The following is a 509-amino-acid chain: 4-aminobutyrate aminotransferase (509 aa).

A pyridoxal 5'-phosphate-binding site is contributed by 166-167 (GS). Residue R223 coordinates substrate. K363 carries the N6-(pyridoxal phosphate)lysine modification. T387 lines the pyridoxal 5'-phosphate pocket.

It belongs to the class-III pyridoxal-phosphate-dependent aminotransferase family. In terms of assembly, homodimer. Requires pyridoxal 5'-phosphate as cofactor.

It is found in the cytoplasm. It carries out the reaction 4-aminobutanoate + 2-oxoglutarate = succinate semialdehyde + L-glutamate. Its function is as follows. Deaminates gamma-aminobutyric acid (GABA) to succinate-semialdehyde, which in turn is converted to succinate by the succinate semialdehyde dehydrogenase. Not required for the utilization of GABA as nitrogen source. This Mycosarcoma maydis (Corn smut fungus) protein is 4-aminobutyrate aminotransferase (GATA).